The primary structure comprises 382 residues: Two-component response regulator ARR14 (382 aa).

A Response regulatory domain is found at 12–128 (RILVVDDDTS…ELKNIWQHVV (117 aa)). Residue Asp-63 is modified to 4-aspartylphosphate. The segment covering 171 to 181 (CRNKKKKKKRS) has biased composition (basic residues). Residues 171 to 193 (CRNKKKKKKRSVDRDDNEDDLLL) are disordered. The Nuclear localization signal signature appears at 199–202 (KKSR). Residues 202-252 (RVVWSIELHQQFVNAVNKLGIDKAVPKRILELMNVPGLSRENVASHLQKFR) constitute a DNA-binding region (myb-like GARP).

This sequence belongs to the ARR family. Type-B subfamily. In terms of assembly, binds the target DNA as a monomer. In terms of processing, two-component system major event consists of a His-to-Asp phosphorelay between a sensor histidine kinase (HK) and a response regulator (RR). In plants, the His-to-Asp phosphorelay involves an additional intermediate named Histidine-containing phosphotransfer protein (HPt). This multistep phosphorelay consists of a His-Asp-His-Asp sequential transfer of a phosphate group between first a His and an Asp of the HK protein, followed by the transfer to a conserved His of the HPt protein and finally the transfer to an Asp in the receiver domain of the RR protein. In terms of tissue distribution, predominantly expressed in young leaf tissue.

Its subcellular location is the nucleus. Transcriptional activator that binds specifically to the DNA sequence 5'-[AG]GATT-3'. Functions as a response regulator involved in His-to-Asp phosphorelay signal transduction system. Phosphorylation of the Asp residue in the receiver domain activates the ability of the protein to promote the transcription of target genes. Could directly activate some type-A response regulators in response to cytokinins. In Arabidopsis thaliana (Mouse-ear cress), this protein is Two-component response regulator ARR14 (ARR14).